The primary structure comprises 179 residues: Inner membrane-spanning protein YciB (179 aa).

A run of 5 helical transmembrane segments spans residues 22 to 42 (IYAA…YSWV), 50 to 70 (MALI…FFHN), 76 to 96 (WKVT…QWVM), 121 to 141 (LAWA…AFWL), and 149 to 169 (FKVF…GVYI).

This sequence belongs to the YciB family.

Its subcellular location is the cell inner membrane. Plays a role in cell envelope biogenesis, maintenance of cell envelope integrity and membrane homeostasis. The protein is Inner membrane-spanning protein YciB of Salmonella arizonae (strain ATCC BAA-731 / CDC346-86 / RSK2980).